The sequence spans 199 residues: Peptidyl-tRNA hydrolase (199 aa).

Residue Tyr-18 coordinates tRNA. His-23 acts as the Proton acceptor in catalysis. Residues Tyr-69, Asn-71, and Asn-117 each contribute to the tRNA site.

It belongs to the PTH family. As to quaternary structure, monomer.

The protein resides in the cytoplasm. It catalyses the reaction an N-acyl-L-alpha-aminoacyl-tRNA + H2O = an N-acyl-L-amino acid + a tRNA + H(+). Functionally, hydrolyzes ribosome-free peptidyl-tRNAs (with 1 or more amino acids incorporated), which drop off the ribosome during protein synthesis, or as a result of ribosome stalling. Its function is as follows. Catalyzes the release of premature peptidyl moieties from peptidyl-tRNA molecules trapped in stalled 50S ribosomal subunits, and thus maintains levels of free tRNAs and 50S ribosomes. The polypeptide is Peptidyl-tRNA hydrolase (Prochlorococcus marinus (strain MIT 9515)).